The chain runs to 230 residues: Claudin-2 (230 aa).

Residues 1–7 (MASLGLQ) lie on the Cytoplasmic side of the membrane. The chain crosses the membrane as a helical span at residues 8-28 (LVGYVLGLLGLLGTVIAMLLP). At 29–81 (SWRTSSYVGASIVTAVGFSKGLWMECATHSTGITQCDIYSTMLGLPADIQAAQ) the chain is on the extracellular side. Cysteine 54 and cysteine 64 are disulfide-bonded. A helical membrane pass occupies residues 82-102 (AMMVTSSAMSSLACIVSVVGM). Over 103–116 (RCTVFFQESRAKDR) the chain is Cytoplasmic. A helical transmembrane segment spans residues 117–137 (VAVVGGVFFILGGLLGFIPVA). Topologically, residues 138–162 (WNLHGILRDFYSPLVPDSMKFEIGE) are extracellular. Residues 163-183 (ALYLGIISSLFSLIAGIFLCF) traverse the membrane as a helical segment. The Cytoplasmic portion of the chain corresponds to 184 to 230 (SCSPQGNRSNYYDAYQAQPLATRSSPRPGQAPKGKSEFNSYSLTGYV). A disordered region spans residues 205 to 230 (TRSSPRPGQAPKGKSEFNSYSLTGYV). A Glycyl lysine isopeptide (Lys-Gly) (interchain with G-Cter in SUMO) cross-link involves residue lysine 218. Residues serine 219 and serine 223 each carry the phosphoserine modification. The segment covering 220–230 (EFNSYSLTGYV) has biased composition (polar residues). The tract at residues 229 to 230 (YV) is interaction with TJP1, TJP2 and TJP3.

Belongs to the claudin family. Can form homo- and heteropolymers with other claudins to mediate paracellular barrier and channel functions of tight junctions in response to physiological stimuli. Homopolymers interact with CLDN3, but not CLDN1, homopolymers. Directly interacts with TJP1/ZO-1, TJP2/ZO-2 and TJP3/ZO-3. Post-translationally, the disulfide bond is necessary for pore formation, but is not required for correct protein trafficking.

The protein resides in the cell junction. It is found in the tight junction. Its subcellular location is the cell membrane. The catalysed reaction is Na(+)(in) = Na(+)(out). It carries out the reaction K(+)(in) = K(+)(out). The enzyme catalyses Rb(+)(in) = Rb(+)(out). It catalyses the reaction Li(+)(in) = Li(+)(out). The catalysed reaction is Cs(+)(in) = Cs(+)(out). It carries out the reaction Ca(2+)(in) = Ca(2+)(out). The enzyme catalyses methylamine(out) = methylamine(in). It catalyses the reaction choline(out) = choline(in). The catalysed reaction is H2O(in) = H2O(out). In terms of biological role, forms paracellular channels: polymerizes in tight junction strands with cation- and water-selective channels through the strands, conveying epithelial permeability in a process known as paracellular tight junction permeability. In intestinal epithelium, allows for sodium and water fluxes from the peritoneal side to the lumen of the intestine to regulate nutrient absorption and clear enteric pathogens as part of mucosal immune response. In kidney, allows passive sodium and calcium reabsorption across proximal tubules from the lumen back to the bloodstream. In the hepatobiliary tract, allows paracellular water and cation fluxes in the hepatic perivenous areas and biliary epithelium to generate bile flow and maintain osmotic gradients. This Bos taurus (Bovine) protein is Claudin-2 (CLDN2).